The primary structure comprises 221 residues: Interleukin-12 subunit alpha (221 aa).

The signal sequence occupies residues 1–25; that stretch reads MCPLRSLLLISTLVLLHHLPHLSLG. 3 disulfides stabilise this stretch: cysteine 39/cysteine 112, cysteine 66/cysteine 198, and cysteine 87/cysteine 125. A glycan (N-linked (GlcNAc...) asparagine) is linked at asparagine 95.

This sequence belongs to the IL-6 superfamily. In terms of assembly, heterodimer with IL12B; disulfide-linked. This heterodimer is known as interleukin IL-12. Heterodimer with EBI3/IL27B; not disulfide-linked. This heterodimer is known as interleukin IL-35. Interacts with NBR1; this interaction promotes IL-12 secretion.

The protein resides in the secreted. Functionally, heterodimerizes with IL12B to form the IL-12 cytokine or with EBI3/IL27B to form the IL-35 cytokine. IL-12 is primarily produced by professional antigen-presenting cells (APCs) such as B-cells and dendritic cells (DCs) as well as macrophages and granulocytes and regulates T-cell and natural killer-cell responses, induces the production of interferon-gamma (IFN-gamma), favors the differentiation of T-helper 1 (Th1) cells and is an important link between innate resistance and adaptive immunity. Mechanistically, exerts its biological effects through a receptor composed of IL12R1 and IL12R2 subunits. Binding to the receptor results in the rapid tyrosine phosphorylation of a number of cellular substrates including the JAK family kinases TYK2 and JAK2. In turn, recruited STAT4 gets phosphorylated and translocates to the nucleus where it regulates cytokine/growth factor responsive genes. As part of IL-35, plays essential roles in maintaining the immune homeostasis of the liver microenvironment and also functions as an immune-suppressive cytokine. Mediates biological events through unconventional receptors composed of IL12RB2 and gp130/IL6ST heterodimers or homodimers. Signaling requires the transcription factors STAT1 and STAT4, which form a unique heterodimer that binds to distinct DNA sites. The polypeptide is Interleukin-12 subunit alpha (IL12A) (Bubalus carabanensis (Swamp type water buffalo)).